Reading from the N-terminus, the 364-residue chain is tRNA 2-selenouridine synthase (364 aa).

The region spanning 14-137 (LIADTPIIDV…LRQTAIQATI (124 aa)) is the Rhodanese domain. Residue Cys-97 is the S-selanylcysteine intermediate of the active site.

Belongs to the SelU family. As to quaternary structure, monomer.

It catalyses the reaction 5-methylaminomethyl-2-thiouridine(34) in tRNA + selenophosphate + (2E)-geranyl diphosphate + H2O + H(+) = 5-methylaminomethyl-2-selenouridine(34) in tRNA + (2E)-thiogeraniol + phosphate + diphosphate. The enzyme catalyses 5-methylaminomethyl-2-thiouridine(34) in tRNA + (2E)-geranyl diphosphate = 5-methylaminomethyl-S-(2E)-geranyl-thiouridine(34) in tRNA + diphosphate. It carries out the reaction 5-methylaminomethyl-S-(2E)-geranyl-thiouridine(34) in tRNA + selenophosphate + H(+) = 5-methylaminomethyl-2-(Se-phospho)selenouridine(34) in tRNA + (2E)-thiogeraniol. The catalysed reaction is 5-methylaminomethyl-2-(Se-phospho)selenouridine(34) in tRNA + H2O = 5-methylaminomethyl-2-selenouridine(34) in tRNA + phosphate. Functionally, involved in the post-transcriptional modification of the uridine at the wobble position (U34) of tRNA(Lys), tRNA(Glu) and tRNA(Gln). Catalyzes the conversion of 2-thiouridine (S2U-RNA) to 2-selenouridine (Se2U-RNA). Acts in a two-step process involving geranylation of 2-thiouridine (S2U) to S-geranyl-2-thiouridine (geS2U) and subsequent selenation of the latter derivative to 2-selenouridine (Se2U) in the tRNA chain. The sequence is that of tRNA 2-selenouridine synthase from Escherichia coli O127:H6 (strain E2348/69 / EPEC).